A 132-amino-acid chain; its full sequence is Small ribosomal subunit protein uS8 (132 aa).

Belongs to the universal ribosomal protein uS8 family. In terms of assembly, part of the 30S ribosomal subunit. Contacts proteins S5 and S12.

Functionally, one of the primary rRNA binding proteins, it binds directly to 16S rRNA central domain where it helps coordinate assembly of the platform of the 30S subunit. In Paracoccus denitrificans (strain Pd 1222), this protein is Small ribosomal subunit protein uS8.